Here is a 171-residue protein sequence, read N- to C-terminus: Adenine phosphoribosyltransferase (171 aa).

Belongs to the purine/pyrimidine phosphoribosyltransferase family. As to quaternary structure, homodimer.

Its subcellular location is the cytoplasm. The enzyme catalyses AMP + diphosphate = 5-phospho-alpha-D-ribose 1-diphosphate + adenine. It functions in the pathway purine metabolism; AMP biosynthesis via salvage pathway; AMP from adenine: step 1/1. Catalyzes a salvage reaction resulting in the formation of AMP, that is energically less costly than de novo synthesis. This chain is Adenine phosphoribosyltransferase, found in Trichlorobacter lovleyi (strain ATCC BAA-1151 / DSM 17278 / SZ) (Geobacter lovleyi).